We begin with the raw amino-acid sequence, 1063 residues long: Probable hemoglobin and hemoglobin-haptoglobin-binding protein 1 (1063 aa).

An N-terminal signal peptide occupies residues Met1–Ala24. 7 tandem repeats follow at residues Gln26 to Asn29, Gln30 to Asn33, Gln34 to Asn37, Gln38 to Asn41, Gln42 to Asn45, Gln46 to Asn49, and Gln50 to Asn53. The interval Gln26 to Asn53 is 7 X 4 AA tandem repeats of Q-P-T-N. Positions Thr28 to Asn55 are enriched in low complexity. Positions Thr28–Asn57 are disordered. Positions Glu63–Ser70 match the TonB box motif. Positions Asn66 to Lys200 constitute a TBDR plug domain. In terms of domain architecture, TBDR beta-barrel spans Asp208–Phe1063. The TonB C-terminal box signature appears at Asn1046–Phe1063.

Belongs to the TonB-dependent receptor family. Hemoglobin/haptoglobin binding protein subfamily.

It is found in the cell outer membrane. Acts as a receptor for hemoglobin or the hemoglobin/haptoglobin complex of the human host and is required for heme uptake. This Haemophilus influenzae (strain ATCC 51907 / DSM 11121 / KW20 / Rd) protein is Probable hemoglobin and hemoglobin-haptoglobin-binding protein 1.